The sequence spans 444 residues: Argininosuccinate synthase (444 aa).

Residues 18 to 26 (AFSGGLDTS) and Ala-44 each bind ATP. Tyr-100 contributes to the L-citrulline binding site. 2 residues coordinate ATP: Gly-130 and Thr-132. The L-aspartate site is built by Thr-132, Asn-136, and Asp-137. Position 136 (Asn-136) interacts with L-citrulline. Asp-137 provides a ligand contact to ATP. Arg-140 and Ser-193 together coordinate L-citrulline. Asp-195 contributes to the ATP binding site. 3 residues coordinate L-citrulline: Thr-202, Glu-204, and Glu-281.

It belongs to the argininosuccinate synthase family. Type 2 subfamily. Homotetramer.

It is found in the cytoplasm. The catalysed reaction is L-citrulline + L-aspartate + ATP = 2-(N(omega)-L-arginino)succinate + AMP + diphosphate + H(+). Its pathway is amino-acid biosynthesis; L-arginine biosynthesis; L-arginine from L-ornithine and carbamoyl phosphate: step 2/3. The protein is Argininosuccinate synthase of Histophilus somni (strain 129Pt) (Haemophilus somnus).